The primary structure comprises 938 residues: Protocadherin gamma-C4 (938 aa).

Residues 1 to 29 form the signal peptide; sequence MLRKVRSWTEIWRWATLLFLFYHLGYVCG. Cadherin domains are found at residues 30 to 133, 134 to 242, 243 to 350, 351 to 455, 456 to 565, and 572 to 676; these read QIRY…APRF, PRQQ…APAF, QQSS…APYI, TVTS…PPSF, FQRS…APAV, and PGSL…VPDL. The Extracellular portion of the chain corresponds to 30–692; it reads QIRYPVPEES…REGESRLTLY (663 aa). N265, N276, and N444 each carry an N-linked (GlcNAc...) asparagine glycan. A helical transmembrane segment spans residues 693-713; sequence LAVSLVAICFVSFGSFVALLS. The Cytoplasmic portion of the chain corresponds to 714–938; it reads KCLRGAACGV…KKKSGKKEKK (225 aa). 2 disordered regions span residues 791 to 847 and 908 to 938; these read PSAP…WPNN and ATLTNAAGKRDGKAPAGGNGNKKKSGKKEKK. The span at 822-847 shows a compositional bias: polar residues; sequence WRFSQAQRPGTSGSQNGDDTGTWPNN. The segment covering 928-938 has biased composition (basic residues); it reads NKKKSGKKEKK.

It localises to the cell membrane. Functionally, potential calcium-dependent cell-adhesion protein. May be involved in the establishment and maintenance of specific neuronal connections in the brain. In Homo sapiens (Human), this protein is Protocadherin gamma-C4 (PCDHGC4).